Reading from the N-terminus, the 152-residue chain is SsrA-binding protein (152 aa).

Belongs to the SmpB family.

The protein localises to the cytoplasm. In terms of biological role, required for rescue of stalled ribosomes mediated by trans-translation. Binds to transfer-messenger RNA (tmRNA), required for stable association of tmRNA with ribosomes. tmRNA and SmpB together mimic tRNA shape, replacing the anticodon stem-loop with SmpB. tmRNA is encoded by the ssrA gene; the 2 termini fold to resemble tRNA(Ala) and it encodes a 'tag peptide', a short internal open reading frame. During trans-translation Ala-aminoacylated tmRNA acts like a tRNA, entering the A-site of stalled ribosomes, displacing the stalled mRNA. The ribosome then switches to translate the ORF on the tmRNA; the nascent peptide is terminated with the 'tag peptide' encoded by the tmRNA and targeted for degradation. The ribosome is freed to recommence translation, which seems to be the essential function of trans-translation. The chain is SsrA-binding protein from Helicobacter pylori (strain HPAG1).